A 162-amino-acid chain; its full sequence is uncharacterized protein (162 aa).

The next 3 membrane-spanning stretches (helical) occupy residues 28–50 (ALAL…VCFF), 57–76 (LLLL…DPWL), and 108–130 (YNTM…YALA).

The protein localises to the cell membrane. This is an uncharacterized protein from Treponema pallidum (strain Nichols).